Reading from the N-terminus, the 494-residue chain is Cobyrinate a,c-diamide synthase (494 aa).

Positions 270–475 (KIGVALDEAF…AHLHGVAYRE (206 aa)) constitute a GATase cobBQ-type domain. Cysteine 352 (nucleophile) is an active-site residue.

The protein belongs to the CobB/CbiA family. Mg(2+) is required as a cofactor.

It carries out the reaction cob(II)yrinate + 2 L-glutamine + 2 ATP + 2 H2O = cob(II)yrinate a,c diamide + 2 L-glutamate + 2 ADP + 2 phosphate + 2 H(+). It catalyses the reaction Ni-sirohydrochlorin + 2 L-glutamine + 2 ATP + 2 H2O = Ni-sirohydrochlorin a,c-diamide + 2 L-glutamate + 2 ADP + 2 phosphate + 2 H(+). It participates in cofactor biosynthesis; adenosylcobalamin biosynthesis; cob(II)yrinate a,c-diamide from sirohydrochlorin (anaerobic route): step 10/10. Its function is as follows. Catalyzes the ATP-dependent amidation of the two carboxylate groups at positions a and c of cobyrinate, using either L-glutamine or ammonia as the nitrogen source (Potential). Involved in the biosynthesis of the unique nickel-containing tetrapyrrole coenzyme F430, the prosthetic group of methyl-coenzyme M reductase (MCR), which plays a key role in methanogenesis and anaerobic methane oxidation. Catalyzes the ATP-dependent amidation of the two carboxylate groups at positions a and c of Ni-sirohydrochlorin, using L-glutamine or ammonia as the nitrogen source. Also able to use sirohydrochlorin as substrate, but only produces a monoamide species in a much slower reaction. Unable to use other metallosirohydrochlorins such as sirohaem and Co-sirohydrochlorin. This Methanosarcina barkeri (strain Fusaro / DSM 804) protein is Cobyrinate a,c-diamide synthase.